A 224-amino-acid polypeptide reads, in one-letter code: Inhibitor of apoptosis protein (224 aa).

A BIR repeat occupies 29 to 92; the sequence is VDARNQSFAI…AFWSRNCGFM (64 aa). Zn(2+) contacts are provided by Cys62, Cys65, His82, and Cys89.

It belongs to the asfivirus IAP family. In terms of assembly, interacts with subunit p17 of host CASP3.

The protein localises to the host cytoplasm. It localises to the virion. Prevents apoptosis of host cell by inhibiting caspase-3/CASP3 activation to promote the viral replication. Also induces the activation of host NF-kappaB. This is Inhibitor of apoptosis protein (p27) from African swine fever virus (isolate Tick/South Africa/Wildebeeslaagte M1/1996) (ASFV).